The following is a 119-amino-acid chain: MSTNNSTQQQDELDQIKSKIQDNLISSGNYDIINKQLKLQLYESGWYDKVSQIASRELMDHQQEVNSSNSNSSNSNKKNELTFDQLFAFVKPKAEELVPNEVKQDILNRITKYLDDIIQ.

It belongs to the ENY2 family. As to quaternary structure, component of the nuclear pore complex (NPC)-associated TREX-2 complex (transcription and export complex 2), composed of at least SUS1, SAC3, THP1, SEM1, and CDC31. TREX-2 contains 2 SUS1 chains. The TREX-2 complex interacts with the nucleoporin NUP1. Component of the 1.8 MDa SAGA transcription coactivator-HAT complex. SAGA is built of 5 distinct domains with specialized functions. Within the SAGA complex, SUS1, SGF11, SGF73 and UBP8 form an additional subcomplex of SAGA called the DUB module (deubiquitination module). Interacts directly with THP1, SAC3, SGF11, and with the RNA polymerase II.

The protein localises to the nucleus. Its subcellular location is the nucleoplasm. It localises to the cytoplasm. The protein resides in the P-body. Functionally, involved in mRNA export coupled transcription activation by association with both the TREX-2 and the SAGA complexes. At the promoters, SAGA is required for recruitment of the basal transcription machinery. It influences RNA polymerase II transcriptional activity through different activities such as TBP interaction and promoter selectivity, interaction with transcription activators, and chromatin modification through histone acetylation and deubiquitination. Within the SAGA complex, participates in a subcomplex required for deubiquitination of H2B and for the maintenance of steady-state H3 methylation levels. The TREX-2 complex functions in docking export-competent ribonucleoprotein particles (mRNPs) to the nuclear entrance of the nuclear pore complex (nuclear basket). TREX-2 participates in mRNA export and accurate chromatin positioning in the nucleus by tethering genes to the nuclear periphery. May also be involved in cytoplasmic mRNA decay by interaction with components of P-bodies. In Candida albicans (strain SC5314 / ATCC MYA-2876) (Yeast), this protein is Transcription and mRNA export factor SUS1.